The chain runs to 291 residues: N-acetylmannosamine kinase (291 aa).

ATP contacts are provided by residues 5–12 and 132–139; these read AIDIGGTK and GVGGGVVS. Zn(2+) contacts are provided by histidine 156, cysteine 166, cysteine 168, and cysteine 173.

It belongs to the ROK (NagC/XylR) family. NanK subfamily. In terms of assembly, homodimer.

It catalyses the reaction an N-acyl-D-mannosamine + ATP = an N-acyl-D-mannosamine 6-phosphate + ADP + H(+). The protein operates within amino-sugar metabolism; N-acetylneuraminate degradation; D-fructose 6-phosphate from N-acetylneuraminate: step 2/5. Catalyzes the phosphorylation of N-acetylmannosamine (ManNAc) to ManNAc-6-P. The polypeptide is N-acetylmannosamine kinase (Escherichia coli (strain K12 / MC4100 / BW2952)).